The chain runs to 1392 residues: Protein dispatched homolog 3 (1392 aa).

Over 1–73 the chain is Cytoplasmic; that stretch reads MDTEDDPLLQ…LGWAFTNPCC (73 aa). Residues 16–40 are disordered; sequence EEQEEEEATGETFLGAQKPGPQPGA. The chain crosses the membrane as a helical span at residues 74 to 94; the sequence is AGLVLFLGCSIPMALSAFMFL. The Lumenal portion of the chain corresponds to 95–462; that stretch reads YYPPLDIDIS…YEVRRTFNND (368 aa). A disordered region spans residues 162–248; that stretch reads GNRSRQASRA…HAAVAANQSR (87 aa). A glycan (N-linked (GlcNAc...) asparagine) is linked at Asn163. Over residues 190–199 the composition is skewed to polar residues; that stretch reads SAAQKPTANR. The region spanning 457–615 is the SSD domain; sequence RTFNNDMLLA…LVTMPAALGL (159 aa). Residues 463–483 form a helical membrane-spanning segment; it reads MLLAFISSSCIAALVYILTSC. Ser484 is a topological domain (cytoplasmic). A helical membrane pass occupies residues 485–505; that stretch reads VFLSFFGIASIGLSCLVALFL. Topologically, residues 506–508 are lumenal; it reads YHV. A helical membrane pass occupies residues 509 to 529; sequence VFGIQYLGILNGVAAFVIVGI. Topologically, residues 530 to 573 are cytoplasmic; sequence GVDDVFVFINTYRQATHLEDPQLRMIHTVQTAGKATFFTSLTTA. The chain crosses the membrane as a helical span at residues 574–594; sequence AAYAANVFSQIPAVHDFGLFM. A topological domain (lumenal) is located at residue Ser595. The chain crosses the membrane as a helical span at residues 596–616; it reads LIVSCCWLAVLVTMPAALGLW. Topologically, residues 617–729 are cytoplasmic; sequence SLYLAPLESS…WVLWSAVKSR (113 aa). The helical transmembrane segment at 730-750 threads the bilayer; sequence WVIVGLFVSILILSLVFASRL. Over 751 to 1182 the chain is Lumenal; sequence RPASRAPLLF…IFMEIVGVQS (432 aa). Asn1021 carries N-linked (GlcNAc...) asparagine glycosylation. Residues 1183-1203 traverse the membrane as a helical segment; that stretch reads ALCGLVLSLLICVAAVAVFTT. A topological domain (cytoplasmic) is located at residue His1204. Residues 1205–1225 traverse the membrane as a helical segment; that stretch reads ILLLLPVLLSILGIVCLVVTI. The Lumenal segment spans residues 1226–1291; sequence MYWSGWEMGA…TLEAVRHVGV (66 aa). Residues 1292–1312 traverse the membrane as a helical segment; that stretch reads AIVSSALTTVIATVPLFFCII. At 1313–1320 the chain is on the cytoplasmic side; it reads APFAKFGK. The chain crosses the membrane as a helical span at residues 1321–1341; sequence IVALNTGVSILYTLTVSTALL. Residues 1342 to 1358 are Lumenal-facing; sequence GIMAPSSFTRTRTSFLK. The helical transmembrane segment at 1359–1379 threads the bilayer; it reads ALGAVLLAGALGLGACLVLLQ. Residues 1380-1392 lie on the Cytoplasmic side of the membrane; sequence SGYKIPLPAGASL.

This sequence belongs to the patched family. In terms of tissue distribution, expressed in brain and testis.

Its subcellular location is the endoplasmic reticulum membrane. The protein localises to the nucleus membrane. It localises to the cytoplasmic vesicle membrane. Plays a role in neuronal proliferation and differentiation. Plays a role in the accumulation of cellular cholesterol. Involved in intracellular lipid droplet formation. May contribute to cholesterol homeostasis in neuronal cells. This is Protein dispatched homolog 3 from Homo sapiens (Human).